The primary structure comprises 155 residues: Ribosome maturation factor RimP (155 aa).

It belongs to the RimP family.

The protein resides in the cytoplasm. Required for maturation of 30S ribosomal subunits. The chain is Ribosome maturation factor RimP from Dichelobacter nodosus (strain VCS1703A).